The following is a 171-amino-acid chain: NRR repressor homolog 2 (171 aa).

Basic and acidic residues predominate over residues 1–12 (MEARLSTGEKTK). 3 disordered regions span residues 1–45 (MEAR…QQQM), 65–94 (AALPSCREDDVSGGGGGEQRQKRPRAAPWR), and 119–143 (TTKGQDGNCKKGKRSEANAAAEEDK). Over residues 26–43 (PEEETAAETTTSEEEEQQ) the composition is skewed to acidic residues.

This sequence belongs to the NPR1-interactor family. In terms of assembly, interacts with NPR1/NH1. Interacts with NPR3/NH3.

It localises to the nucleus. In terms of biological role, binds to and weakly represses NPR1/NH1-mediated transcriptional activation of LG2 in vitro. In Oryza sativa subsp. japonica (Rice), this protein is NRR repressor homolog 2.